Here is a 601-residue protein sequence, read N- to C-terminus: Putative purine permease C1399.01c (601 aa).

The next 12 helical transmembrane spans lie at 64–84, 102–122, 131–151, 179–199, 207–227, 264–284, 294–314, 337–357, 424–444, 450–470, 481–501, and 522–542; these read VPVL…VGGV, TNYL…IQIA, YYIG…VSVA, YGAF…MSFI, LFPP…LISS, GWGS…IIII, TTSV…TGYW, IYGP…MEAI, FFCA…AVFV, VLGG…IAII, FILT…DWFT, and LVME…NLIL.

This sequence belongs to the nucleobase:cation symporter-2 (NCS2) (TC 2.A.40) family.

The protein resides in the vacuole membrane. This chain is Putative purine permease C1399.01c, found in Schizosaccharomyces pombe (strain 972 / ATCC 24843) (Fission yeast).